The chain runs to 830 residues: MTQVAEIKSPHEQRLEDNIAGKEDIYRESHKRVFKLLERFDGQKPAIDVERALYFTQSMAETVGQPLVLRWAKALMNVAKNITVMVQDDQLLLGRCGGHDGRYGILYPELDGDFLDIAVRDLPTRPQSPASISPEDAKIVVEQIAPFWKGRTYHEALNKALPAEVHKLTYDDPDGLISRFIVNETSSFRSSIQWVHDYEVVLKRGFNGLKQEMEEKLAALDPASPVDQVDKRPFIEATILVCDAIVLWAKRHADAARKAAEACADPVRKAELIRMAENAEHVPANPARDFYEAVQSQYFTQMFSRLEQKTGTTISNGRMDQYFYPFYKKDMEAGILTDEKTLEYLECMWVGMAEFIDMYISPAGGAFNEGYAHWEAVTIGGQTPDGRDATNDLTYLFLKSKREFPLHYPDLAARIHSRAPERYLWDVAETIKFGSGFPKLCNDEECIPLYVSKGATFEEALDYAVSGCIEIRMPNRDTYTSGGAYTNFASAVEMALYDGKMKKYGDVQLGIQTGDARKFKSWDEFWNAYVQQHMLLLRTTFIQQYIVIQTRAKHFAQPMGSVLHALCRKHCIDLHQPQIPEGLNFGYFEFMGLGTVIDSLAAIKKLVFEDKKLTMDQLIDALEANFEGYEDIQQLLRTAPCYGNDDEYADEIGRELDRMAVSFAAKYGKEMGINNDARYVPFTSHVPFGKVVSATPNGRVAWFPLADGSSPSHGADHNGPTAILLSNHNTKNYGMRARAARLINVKFTPKCVEGDAGTEKLVQFIRTWCDLKLWHIQFNVINADTLKKAQKDPQKYRNLIVRIAGYSAYFVDLTPDLQNDLIARTGHDQM.

The region spanning 31–700 is the PFL domain; it reads KRVFKLLERF…VVSATPNGRV (670 aa). Residues Arg189, Gln193, 468–470, and Arg678 contribute to the 2-hydroxyethane-1-sulfonate site; that span reads CIE. Cys468 serves as the catalytic Cysteine radical intermediate. Glu470 acts as the Proton acceptor in catalysis. Residues 707 to 830 form the Glycine radical domain; it reads DGSSPSHGAD…LIARTGHDQM (124 aa). Gly805 carries the post-translational modification Glycine radical.

The protein belongs to the glycyl radical enzyme (GRE) family. In terms of assembly, homodimer. Post-translationally, requires the activating protein IslB to generate the key active site glycyl radical on Gly-805 that is involved in catalysis.

The catalysed reaction is 2-hydroxyethane-1-sulfonate = acetaldehyde + sulfite + H(+). It functions in the pathway organosulfur degradation; alkanesulfonate degradation. Involved in an anaerobic respiration pathway that converts the sulfonate taurine (2-aminoethanesulfonate) to ammonia, acetate and sulfide. Catalyzes the radical-mediated C-S bond cleavage of isethionate (2-hydroxyethanesulfonate) to form sulfite and acetaldehyde. Is not able to use any alternate organosulfonate or (S)-1,2-propanediol or choline as a substrate, showing that this enzyme is highly specific for isethionate. This chain is Isethionate sulfite-lyase, found in Bilophila wadsworthia (strain 3_1_6).